Reading from the N-terminus, the 163-residue chain is Neurotrophin-3 (163 aa).

An N-terminal signal peptide occupies residues 1–3 (IQS). A propeptide spanning residues 4–119 (TSMDQGILTE…VLNRTSRRKR (116 aa)) is cleaved from the precursor. N-linked (GlcNAc...) asparagine glycosylation is present at asparagine 112.

Belongs to the NGF-beta family.

It is found in the secreted. Its function is as follows. Seems to promote the survival of visceral and proprioceptive sensory neurons. This Chilabothrus striatus (Haitian boa constrictor) protein is Neurotrophin-3 (NTF3).